Reading from the N-terminus, the 289-residue chain is Leucine--tRNA ligase subunit beta (289 aa).

The 'KMSKS' region motif lies at 45–49 (KMSKS). Lys-48 contributes to the ATP binding site.

Belongs to the class-I aminoacyl-tRNA synthetase family. In terms of assembly, seems to consist of an alpha chain and a beta chain.

It localises to the cytoplasm. It carries out the reaction tRNA(Leu) + L-leucine + ATP = L-leucyl-tRNA(Leu) + AMP + diphosphate. In Aquifex aeolicus (strain VF5), this protein is Leucine--tRNA ligase subunit beta (leuS').